A 437-amino-acid chain; its full sequence is Neomycin resistance protein (437 aa).

2 disordered regions span residues 161 to 285 and 305 to 338; these read GQRG…EEEA and VSGA…PVPD. Low complexity predominate over residues 203-229; the sequence is PPTGARSPGATAGARATASTSSSSVRS. Positions 324 to 338 are enriched in basic residues; that stretch reads RRRHRGRRHGRPVPD.

This sequence belongs to the Gram-positive plasmids replication protein type 1 family.

The protein is Neomycin resistance protein of Streptomyces cyanogenus.